The primary structure comprises 223 residues: Pyridoxine/pyridoxamine 5'-phosphate oxidase (223 aa).

Residues 13–16 (RKNY) and Lys73 contribute to the substrate site. Residues 68 to 73 (RIVLLK), 83 to 84 (YT), Lys90, and Gln112 each bind FMN. Residues Tyr130, Arg134, and Ser138 each contribute to the substrate site. FMN-binding positions include 147-148 (QS) and Trp193. Residue 199 to 201 (RLH) participates in substrate binding. Arg203 contacts FMN.

Belongs to the pyridoxamine 5'-phosphate oxidase family. In terms of assembly, homodimer. FMN is required as a cofactor.

The catalysed reaction is pyridoxamine 5'-phosphate + O2 + H2O = pyridoxal 5'-phosphate + H2O2 + NH4(+). The enzyme catalyses pyridoxine 5'-phosphate + O2 = pyridoxal 5'-phosphate + H2O2. It participates in cofactor metabolism; pyridoxal 5'-phosphate salvage; pyridoxal 5'-phosphate from pyridoxamine 5'-phosphate: step 1/1. It functions in the pathway cofactor metabolism; pyridoxal 5'-phosphate salvage; pyridoxal 5'-phosphate from pyridoxine 5'-phosphate: step 1/1. In terms of biological role, catalyzes the oxidation of either pyridoxine 5'-phosphate (PNP) or pyridoxamine 5'-phosphate (PMP) into pyridoxal 5'-phosphate (PLP). The protein is Pyridoxine/pyridoxamine 5'-phosphate oxidase of Rhodopirellula baltica (strain DSM 10527 / NCIMB 13988 / SH1).